We begin with the raw amino-acid sequence, 336 residues long: UbiA prenyltransferase domain-containing protein 1 (336 aa).

Residues 1 to 22 (MQEMKPAALSGSNGLNGASGSS) are disordered. The span at 7-22 (AALSGSNGLNGASGSS) shows a compositional bias: low complexity. Transmembrane regions (helical) follow at residues 79-99 (LLLLLVCAVAVLLVHGAGNLV), 129-149 (VVMFGAVLYSAGCLCATLLYF), 158-178 (LALIYFGGLSSSFLYTGGIGL), 180-200 (YVALGDVVILITFGPLAVMFA), 201-221 (HAVQVGYLSVLPLVYAVPLAL), 254-274 (LSYVIYNLLLFVPYLLFCILA), and 315-335 (LLMGLFYVFGIILAPQGSLPL).

It belongs to the UbiA prenyltransferase family.

It is found in the endoplasmic reticulum membrane. Its subcellular location is the golgi apparatus membrane. The protein localises to the mitochondrion membrane. The enzyme catalyses menadiol + (2E,6E,10E)-geranylgeranyl diphosphate = menaquinol-4 + diphosphate. The catalysed reaction is all-trans-decaprenyl diphosphate + 4-hydroxybenzoate = 4-hydroxy-3-(all-trans-decaprenyl)benzoate + diphosphate. The protein operates within quinol/quinone metabolism; menaquinone biosynthesis. Its pathway is cofactor biosynthesis; ubiquinone biosynthesis. In terms of biological role, prenyltransferase that mediates the formation of menaquinone-4 (MK-4) and coenzyme Q10. MK-4 is a vitamin K2 isoform required for endothelial cell development. Mediates the conversion of phylloquinone (PK) into MK-4, probably by cleaving the side chain of phylloquinone (PK) to release 2-methyl-1,4-naphthoquinone (menadione; K3) and then prenylating it with geranylgeranyl pyrophosphate (GGPP) to form MK-4. Also plays a role in cardiovascular development independently of MK-4 biosynthesis, by acting as a coenzyme Q10 biosynthetic enzyme: coenzyme Q10, also named ubiquinone, plays an important antioxidant role in the cardiovascular system. Mediates biosynthesis of coenzyme Q10 in the Golgi membrane, leading to protect cardiovascular tissues from nos3/eNOS-dependent oxidative stress. In Danio rerio (Zebrafish), this protein is UbiA prenyltransferase domain-containing protein 1 (ubiad1).